The chain runs to 109 residues: Nucleoid-associated protein Asuc_0997 (109 aa).

Positions 1 to 23 (MFGKGGLGGLMKQAQQMQERMQK) are disordered.

This sequence belongs to the YbaB/EbfC family. As to quaternary structure, homodimer.

It localises to the cytoplasm. The protein resides in the nucleoid. Functionally, binds to DNA and alters its conformation. May be involved in regulation of gene expression, nucleoid organization and DNA protection. The protein is Nucleoid-associated protein Asuc_0997 of Actinobacillus succinogenes (strain ATCC 55618 / DSM 22257 / CCUG 43843 / 130Z).